Reading from the N-terminus, the 166-residue chain is Mitochondrial fission process protein 1 (166 aa).

Transmembrane regions (helical) follow at residues 34–54 (SLVP…YVLA) and 80–100 (AVVD…GFTI). An N6-succinyllysine modification is found at lysine 123. Residues 129–149 (LGLLTIPIIIHPIDRSVDFLL) form a helical membrane-spanning segment.

The protein belongs to the MTFP1 family.

It is found in the mitochondrion inner membrane. Involved in the mitochondrial division probably by regulating membrane fission. Loss-of-function induces the release of cytochrome c, which activates the caspase cascade and leads to apoptosis. The protein is Mitochondrial fission process protein 1 (MTFP1) of Homo sapiens (Human).